The sequence spans 468 residues: Probable Xaa-Pro aminopeptidase PEPP (468 aa).

Residues D264, D275, E398, and E438 each coordinate Mn(2+).

Belongs to the peptidase M24B family. Mn(2+) is required as a cofactor.

It carries out the reaction Release of any N-terminal amino acid, including proline, that is linked to proline, even from a dipeptide or tripeptide.. In terms of biological role, catalyzes the removal of a penultimate prolyl residue from the N-termini of peptides. This Paracoccidioides lutzii (strain ATCC MYA-826 / Pb01) (Paracoccidioides brasiliensis) protein is Probable Xaa-Pro aminopeptidase PEPP (PEPP).